The following is a 284-amino-acid chain: MGEIIDGKKLAKEIQEKVTSEVAELVKQGKKPGLAVVLVGDNQASRTYVRNKQKRTEEAGMKSVLIELPETVTEEKLLKVVEELNEDNTIHGILVQLPLPKHISEEKVIDAISFDKDVDGFHPVNVGNLFIGKDSFVPCTPAGIIELIKSTGTQIEGKRAVVIGRSNIVGKPVAQLLLNENATVTIAHSRTKDLPQVAKEADILVVATGLAKFVKKEYIKPGAIVIDVGMDRDENNKLCGDVDFDDVKEQAGFITPVPGGVGPMTITMLLANTLKAAKRIWKMN.

NADP(+) is bound by residues 164 to 166 (GRS) and S189.

It belongs to the tetrahydrofolate dehydrogenase/cyclohydrolase family. As to quaternary structure, homodimer.

The enzyme catalyses (6R)-5,10-methylene-5,6,7,8-tetrahydrofolate + NADP(+) = (6R)-5,10-methenyltetrahydrofolate + NADPH. The catalysed reaction is (6R)-5,10-methenyltetrahydrofolate + H2O = (6R)-10-formyltetrahydrofolate + H(+). Its pathway is one-carbon metabolism; tetrahydrofolate interconversion. Functionally, catalyzes the oxidation of 5,10-methylenetetrahydrofolate to 5,10-methenyltetrahydrofolate and then the hydrolysis of 5,10-methenyltetrahydrofolate to 10-formyltetrahydrofolate. The sequence is that of Bifunctional protein FolD from Listeria innocua serovar 6a (strain ATCC BAA-680 / CLIP 11262).